The sequence spans 1214 residues: MKAIYRDMCPNCRGAITDERLAAKNPCDACLDEPISMDDYFQLVTAIRKALKLKGVLKEWEEIYALNKEVKEIEELFKKATGFTFWSAQRSWVKRIIKGKSFSIIAPTGMGKSTFGAFMSIYFALKGKKSYIVVPTTPLVVQTVKKIKAMMEKAEVKVNLVYYHGNLKKKEKDEALEKIKSGNFDILVTSSQFLATRFDELLKDKRIDFMFVDDVDAFLKASKNIDRSLMMLGFNEEIIKKAWEIIKLKKQLAKLLQNESGNEEVEKLNREIERLEREIERYKKENKIGILIVASATGSARGDRIKLYRELLGFEVGSGRSVLRNIVDTYIIPEKSMEEHVEELLKTLGRGGLIFVPIDKGIEYAEQLTNYLKSKGFKVELVSARDKKGLELFEKEEVDYLVGVATYYGTIVRGLDLPHLVRFAIFTGVPKFRFSLDLEQPTIYRVLGLMSEILEFLPEEKRTEGEKLYARLRRLIRNIPQYELMKIEEALAEGLELEGFYNHVLEVFKQAVEFLREALKDEEVLKKIAENPFLSLKQIEGKWYIEIPDVRTYIQASGRTSRLFAGGITKGLSVILVDDQKVFNGLIRQMRWRFVEFEIKPLGEINIEEVLKEIDRDREKVRLVLEGKISEQVKDLVKSALMIVESPNKARTIANFFGQPSKRRIGDLVAYEVSIGDKMLTILASGGHMFDLVTTEGYHGVLLLEKGGKRYFVPVYDTIKRCRDCGHQFVDWEEKGVCPRCGSRNVYDALENVKAMRDLAQEVDEILIGTDPDTEGEKIAWDIRNVLSPYAPVIKRIEFHEVTRPAILRAINEARDINEDRVNAQLVRRIEDRWIGFELSQKLWEVFENYNLSAGRVQTPVLGWIVQRYKEFTESETDFLGLTLENDITIILEGVSGDVQEVYVKEVTIEEREINPLPPYTTDAMLQDASRFLGFSATHTMQLAQDLFELGLTTYHRTDSIHVSNTGIEIAKEYITQEIGEEYFAPRKWGEEGAHEAIRPTRPIDTGRLIQLIRDGIITLPRNLTKDHFKLYDLIFRRFMASQMKPAKVLYERAVIGTPYGEVEIEGYIDVIYDGWSRIKPLPLKKLPRLEKDQILKVTEIRKWRAPKVSLYTQGDVIALMKERGIGRPSTYAKIVQTLLQRGYVIETKSKKKLVPTEKGIKVYHYLVSKYKDLVSEERTRQLEKLMDMVEEAKANYQEVLNELYEEILRYVKS.

An RG N-terminal-type zinc finger spans residues 1 to 37; that stretch reads MKAIYRDMCPNCRGAITDERLAAKNPCDACLDEPISM. Residues Cys9, Cys12, Cys27, and Cys30 each contribute to the Zn(2+) site. ATP-binding positions include Gln89 and 106-113; that span reads APTGMGKS. A Helicase ATP-binding domain is found at 93 to 252; it reads VKRIIKGKSF…WEIIKLKKQL (160 aa). Residues 213–216 carry the DEAD box motif; sequence DDVD. Residues 635-1214 are topoisomerase I; sequence DLVKSALMIV…YEEILRYVKS (580 aa). The region spanning 639–802 is the Toprim domain; sequence SALMIVESPN…VIKRIEFHEV (164 aa). Mg(2+) is bound at residue Glu645. The RG C-terminal-type zinc-finger motif lies at 719–748; the sequence is IKRCRDCGHQFVDWEEKGVCPRCGSRNVYD. Residues Cys722, Cys725, Cys738, and Cys741 each contribute to the Zn(2+) site. Asp771 contributes to the Mg(2+) binding site. The region spanning 818 to 1212 is the Topo IA-type catalytic domain; sequence NEDRVNAQLV…ELYEEILRYV (395 aa). Catalysis depends on Tyr955, which acts as the O-(5'-phospho-DNA)-tyrosine intermediate.

In the N-terminal section; belongs to the DEAD box helicase family. DDVD subfamily. This sequence in the C-terminal section; belongs to the type IA topoisomerase family. In terms of assembly, monomer. It depends on Zn(2+) as a cofactor. Mg(2+) is required as a cofactor.

The protein localises to the cytoplasm. It catalyses the reaction ATP + H2O = ADP + phosphate + H(+). Functionally, modifies the topological state of DNA by introducing positive supercoils in an ATP-dependent process. Increases the linking number in steps of +1. Binds to single-stranded DNA, transiently cleaves and then rejoins the ends, introducing a positive supercoil in the process. The scissile phosphodiester is attacked by the catalytic tyrosine of the enzyme, resulting in the formation of a DNA-(5'-phosphotyrosyl)-enzyme intermediate. Probably involved in rewinding DNA strands in regions of the chromosome that have opened up to allow replication, transcription, DNA repair and/or for DNA protection. This is Reverse gyrase from Pyrococcus furiosus (strain ATCC 43587 / DSM 3638 / JCM 8422 / Vc1).